A 294-amino-acid polypeptide reads, in one-letter code: S-adenosylmethionine uptake transporter (294 aa).

Transmembrane regions (helical) follow at residues 4–24 (ALKT…TSSI), 41–61 (VAFF…VYYG), 74–91 (VLRG…TYGL), 98–118 (TATV…VFIL), 121–141 (NIIW…VVML), 148–168 (FNPE…LDII), 178–198 (MLSM…PVAM), 207–227 (FELA…FFLL), 237–257 (ATAP…YFIF), and 260–280 (FPDK…LFII). 2 consecutive EamA domains span residues 22–141 (SSIN…VVML) and 160–280 (ISFA…LFII).

It belongs to the drug/metabolite transporter (DMT) superfamily. 10 TMS drug/metabolite exporter (DME) (TC 2.A.7.3) family.

The protein localises to the cell inner membrane. Its activity is regulated as follows. Transport is inhibited by S-adenosylethionine and to a lesser extent by S-adenosylhomocysteine. Unlike eukaryotic transporters is not inhibited by sinfungin. Also inhibited by 2.4-dinitrophenol, suggesting transport is an energy-dependent process. Functionally, transports S-adenosylmethionine. In Rickettsia prowazekii (strain Madrid E), this protein is S-adenosylmethionine uptake transporter (sam).